Here is an 827-residue protein sequence, read N- to C-terminus: Translation initiation factor IF-2 (827 aa).

Residues 49–205 form a disordered region; that stretch reads ALNREKEEKE…GAPDKKREWE (157 aa). 6 stretches are compositionally biased toward basic and acidic residues: residues 50–73, 96–106, 116–129, 137–150, 157–168, and 182–205; these read LNRE…KAEA, RPREQRSDRPQ, PEPR…RPGE, RPRD…KERG, FGEKKERPPFPR, and EAPK…REWE. The 170-residue stretch at 326 to 495 folds into the tr-type G domain; that stretch reads PRPPIVTVMG…LLVADLKELK (170 aa). The segment at 335–342 is G1; the sequence is GHVDHGKT. Position 335 to 342 (335 to 342) interacts with GTP; the sequence is GHVDHGKT. The interval 360–364 is G2; sequence GITQH. The segment at 381-384 is G3; it reads DTPG. GTP contacts are provided by residues 381–385 and 435–438; these read DTPGH and NKID. Residues 435–438 form a G4 region; the sequence is NKID. Residues 471–473 are G5; the sequence is SAL.

This sequence belongs to the TRAFAC class translation factor GTPase superfamily. Classic translation factor GTPase family. IF-2 subfamily.

The protein resides in the cytoplasm. One of the essential components for the initiation of protein synthesis. Protects formylmethionyl-tRNA from spontaneous hydrolysis and promotes its binding to the 30S ribosomal subunits. Also involved in the hydrolysis of GTP during the formation of the 70S ribosomal complex. The protein is Translation initiation factor IF-2 of Carboxydothermus hydrogenoformans (strain ATCC BAA-161 / DSM 6008 / Z-2901).